The primary structure comprises 839 residues: Phosphatidylinositol-glycan-specific phospholipase D (839 aa).

A signal peptide spans 1–23 (MSAFRFWSGLLMLLGFLCPRSSP). Residues Asn-94, Asn-271, Asn-292, Asn-307, and Asn-321 are each glycosylated (N-linked (GlcNAc...) asparagine). FG-GAP repeat units follow at residues 365 to 427 (SSPA…GLPR), 434 to 496 (KEAH…GQLS), 498 to 558 (SPNV…YSSR), 562 to 622 (NVEA…SPGR), 632 to 692 (QSWF…GSTR), 703 to 769 (SLLS…TVGD), and 787 to 839 (QYVL…LGQD). N-linked (GlcNAc...) asparagine glycans are attached at residues Asn-500, Asn-590, and Asn-658.

This sequence belongs to the GPLD1 family. In terms of assembly, monomer. Glycosylated.

It localises to the secreted. The enzyme catalyses a 6-(alpha-D-glucosaminyl)-1-(1,2-diacyl-sn-glycero-3-phospho)-1D-myo-inositol + H2O = 6-(alpha-D-glucosaminyl)-1D-myo-inositol + a 1,2-diacyl-sn-glycero-3-phosphate + H(+). Its function is as follows. This protein hydrolyzes the inositol phosphate linkage in proteins anchored by phosphatidylinositol glycans (GPI-anchor) thus releasing these proteins from the membrane. The chain is Phosphatidylinositol-glycan-specific phospholipase D (GPLD1) from Bos taurus (Bovine).